The sequence spans 415 residues: D-serine dehydratase (415 aa).

An N6-(pyridoxal phosphate)lysine modification is found at Lys68. The pyridoxal 5'-phosphate site is built by Tyr204, Tyr211, Thr253, Gly279, and Asn280. Zn(2+)-binding residues include His385 and Cys387.

It belongs to the DSD1 family. Homodimer. The cofactor is pyridoxal 5'-phosphate. Zn(2+) serves as cofactor.

The protein resides in the cytoplasm. Its subcellular location is the nucleus. It catalyses the reaction D-serine = pyruvate + NH4(+). Its function is as follows. Catalyzes the conversion of D-serine to pyruvate and ammonia. May play a role in D-serine detoxification. The sequence is that of D-serine dehydratase from Schizosaccharomyces pombe (strain 972 / ATCC 24843) (Fission yeast).